The sequence spans 256 residues: Thiazole synthase (256 aa).

Lys-95 serves as the catalytic Schiff-base intermediate with DXP. 1-deoxy-D-xylulose 5-phosphate-binding positions include Gly-156, 182-183, and 204-205; these read AG and NT.

It belongs to the ThiG family. In terms of assembly, homotetramer. Forms heterodimers with either ThiH or ThiS.

It is found in the cytoplasm. The enzyme catalyses [ThiS sulfur-carrier protein]-C-terminal-Gly-aminoethanethioate + 2-iminoacetate + 1-deoxy-D-xylulose 5-phosphate = [ThiS sulfur-carrier protein]-C-terminal Gly-Gly + 2-[(2R,5Z)-2-carboxy-4-methylthiazol-5(2H)-ylidene]ethyl phosphate + 2 H2O + H(+). It functions in the pathway cofactor biosynthesis; thiamine diphosphate biosynthesis. Its function is as follows. Catalyzes the rearrangement of 1-deoxy-D-xylulose 5-phosphate (DXP) to produce the thiazole phosphate moiety of thiamine. Sulfur is provided by the thiocarboxylate moiety of the carrier protein ThiS. In vitro, sulfur can be provided by H(2)S. The protein is Thiazole synthase of Salmonella paratyphi B (strain ATCC BAA-1250 / SPB7).